The sequence spans 393 residues: Formate-dependent phosphoribosylglycinamide formyltransferase (393 aa).

Residues 22-23 and Glu82 each bind N(1)-(5-phospho-beta-D-ribosyl)glycinamide; that span reads EL. Residues Arg114, Lys155, 160–165, 195–198, and Glu203 each bind ATP; these read SSGKGQ and ESFV. The ATP-grasp domain occupies 119 to 308; it reads RLAAEELGLR…EFALHVRAVL (190 aa). Mg(2+) contacts are provided by Glu267 and Glu279. N(1)-(5-phospho-beta-D-ribosyl)glycinamide contacts are provided by residues Asp286, Lys356, and 363 to 364; that span reads RR.

This sequence belongs to the PurK/PurT family. In terms of assembly, homodimer.

The catalysed reaction is N(1)-(5-phospho-beta-D-ribosyl)glycinamide + formate + ATP = N(2)-formyl-N(1)-(5-phospho-beta-D-ribosyl)glycinamide + ADP + phosphate + H(+). It functions in the pathway purine metabolism; IMP biosynthesis via de novo pathway; N(2)-formyl-N(1)-(5-phospho-D-ribosyl)glycinamide from N(1)-(5-phospho-D-ribosyl)glycinamide (formate route): step 1/1. Functionally, involved in the de novo purine biosynthesis. Catalyzes the transfer of formate to 5-phospho-ribosyl-glycinamide (GAR), producing 5-phospho-ribosyl-N-formylglycinamide (FGAR). Formate is provided by PurU via hydrolysis of 10-formyl-tetrahydrofolate. The protein is Formate-dependent phosphoribosylglycinamide formyltransferase of Oleidesulfovibrio alaskensis (strain ATCC BAA-1058 / DSM 17464 / G20) (Desulfovibrio alaskensis).